Consider the following 1368-residue polypeptide: DNA-directed RNA polymerase subunit beta (1368 aa).

Belongs to the RNA polymerase beta chain family. As to quaternary structure, the RNAP catalytic core consists of 2 alpha, 1 beta, 1 beta' and 1 omega subunit. When a sigma factor is associated with the core the holoenzyme is formed, which can initiate transcription.

The catalysed reaction is RNA(n) + a ribonucleoside 5'-triphosphate = RNA(n+1) + diphosphate. Its function is as follows. DNA-dependent RNA polymerase catalyzes the transcription of DNA into RNA using the four ribonucleoside triphosphates as substrates. The protein is DNA-directed RNA polymerase subunit beta of Burkholderia cenocepacia (strain ATCC BAA-245 / DSM 16553 / LMG 16656 / NCTC 13227 / J2315 / CF5610) (Burkholderia cepacia (strain J2315)).